Consider the following 460-residue polypeptide: Putative 2,3-dihydroxypropane-1-sulfonate exporter (460 aa).

Residues 1–18 lie on the Cytoplasmic side of the membrane; sequence MSQTSSNPATLRLPFKEK. The helical transmembrane segment at 19–39 threads the bilayer; it reads LAYGLGDLGSNILLDIGTLYL. Over 40-46 the chain is Periplasmic; that stretch reads LKFYTDV. Residues 47-67 form a helical membrane-spanning segment; that stretch reads LGLPGTYGGIIFLIAKFFTAF. The Cytoplasmic portion of the chain corresponds to 68–91; it reads TDMGTGIMLDSRRKIGPKGKFRPF. The chain crosses the membrane as a helical span at residues 92–112; the sequence is VLYAAFPVTLLAIANFVGTPF. The Periplasmic segment spans residues 113–122; sequence EVTGKTVVAT. Residues 123–143 traverse the membrane as a helical segment; it reads MLFMLYGLVFSMMNCSYGAMV. At 144–161 the chain is on the cytoplasmic side; the sequence is PAITKNPDERASLAAWRQ. A helical transmembrane segment spans residues 162-182; that stretch reads GGATLGLLLCTVGFVPVMNLI. At 183-190 the chain is on the periplasmic side; the sequence is EGNAQLSY. A helical transmembrane segment spans residues 191–211; that stretch reads IFAATLFSLFGLLFMWLCYAG. The Cytoplasmic segment spans residues 212–242; sequence VKERYVEVKPVDSAQKPGLLQSFRAIAGNRP. The chain crosses the membrane as a helical span at residues 243-263; that stretch reads LFILCIANLCTLGAFNVKLAI. Residues 264–275 are Periplasmic-facing; sequence QVYYTQYVLNDP. The chain crosses the membrane as a helical span at residues 276 to 296; the sequence is ILLSWMGFFSMGCIFIGVFLM. The Cytoplasmic segment spans residues 297-307; that stretch reads PGAVRRFGKKK. Residues 308-328 traverse the membrane as a helical segment; that stretch reads VYIGGLLIWVAGDLLNYFFGG. Position 329 (Gly329) is a topological domain, periplasmic. A helical transmembrane segment spans residues 330–350; it reads SVSFVAFSCLAFFGSAFVNSL. Residues 351–386 lie on the Cytoplasmic side of the membrane; that stretch reads NWALVSDTVEYGEWRTGVRSEGTVYTGFTFFRKVSQ. Residues 387–407 form a helical membrane-spanning segment; it reads ALAGFFPGWMLTQIGYIPNVV. At 408–418 the chain is on the periplasmic side; it reads QSAGTVEGLRQ. The chain crosses the membrane as a helical span at residues 419 to 439; it reads LIFIYPCVLAVITIIAMGCFY. Residues 440–460 are Cytoplasmic-facing; the sequence is NLNEKMYVRIVEEIEARKHTV.

It belongs to the sodium:galactoside symporter (TC 2.A.2) family.

It is found in the cell inner membrane. Functionally, could be involved in the export of 2,3-dihydroxypropane-1-sulfonate (DHPS). The sequence is that of Putative 2,3-dihydroxypropane-1-sulfonate exporter (yihP) from Salmonella typhimurium (strain LT2 / SGSC1412 / ATCC 700720).